The chain runs to 166 residues: Protein UL5 (166 aa).

In terms of assembly, interacts with host IQGAP1.

Its subcellular location is the host cytoplasm. Functionally, may play a role in rearrangement of cellular cytoskeleton towards an efficient viral assembly and spreading. The polypeptide is Protein UL5 (UL5) (Human cytomegalovirus (strain Merlin) (HHV-5)).